Reading from the N-terminus, the 129-residue chain is Phosphoribosyl-AMP cyclohydrolase (129 aa).

Aspartate 76 is a Mg(2+) binding site. Cysteine 77 contacts Zn(2+). Mg(2+)-binding residues include aspartate 78 and aspartate 80. Positions 97 and 104 each coordinate Zn(2+).

This sequence belongs to the PRA-CH family. Homodimer. The cofactor is Mg(2+). Zn(2+) serves as cofactor.

It localises to the cytoplasm. The catalysed reaction is 1-(5-phospho-beta-D-ribosyl)-5'-AMP + H2O = 1-(5-phospho-beta-D-ribosyl)-5-[(5-phospho-beta-D-ribosylamino)methylideneamino]imidazole-4-carboxamide. Its pathway is amino-acid biosynthesis; L-histidine biosynthesis; L-histidine from 5-phospho-alpha-D-ribose 1-diphosphate: step 3/9. Its function is as follows. Catalyzes the hydrolysis of the adenine ring of phosphoribosyl-AMP. In Albidiferax ferrireducens (strain ATCC BAA-621 / DSM 15236 / T118) (Rhodoferax ferrireducens), this protein is Phosphoribosyl-AMP cyclohydrolase.